The following is a 269-amino-acid chain: tRNA pseudouridine synthase A (269 aa).

Catalysis depends on aspartate 55, which acts as the Nucleophile. Position 111 (tyrosine 111) interacts with substrate.

This sequence belongs to the tRNA pseudouridine synthase TruA family.

The enzyme catalyses uridine(38/39/40) in tRNA = pseudouridine(38/39/40) in tRNA. Formation of pseudouridine at positions 38, 39 and 40 in the anticodon stem and loop of transfer RNAs. The polypeptide is tRNA pseudouridine synthase A (Methanosarcina acetivorans (strain ATCC 35395 / DSM 2834 / JCM 12185 / C2A)).